The chain runs to 229 residues: 3-dehydroquinate dehydratase (229 aa).

3-dehydroquinate-binding positions include 29 to 31 (ELR) and R56. The active-site Proton donor/acceptor is H120. Residue K146 is the Schiff-base intermediate with substrate of the active site. Residues R187, T208, and Q212 each contribute to the 3-dehydroquinate site.

It belongs to the type-I 3-dehydroquinase family. Homodimer.

It carries out the reaction 3-dehydroquinate = 3-dehydroshikimate + H2O. The protein operates within metabolic intermediate biosynthesis; chorismate biosynthesis; chorismate from D-erythrose 4-phosphate and phosphoenolpyruvate: step 3/7. In terms of biological role, involved in the third step of the chorismate pathway, which leads to the biosynthesis of aromatic amino acids. Catalyzes the cis-dehydration of 3-dehydroquinate (DHQ) and introduces the first double bond of the aromatic ring to yield 3-dehydroshikimate. This is 3-dehydroquinate dehydratase from Haloarcula marismortui (strain ATCC 43049 / DSM 3752 / JCM 8966 / VKM B-1809) (Halobacterium marismortui).